Consider the following 306-residue polypeptide: Triplex capsid protein 2 (306 aa).

The protein belongs to the herpesviridae TRX2 protein family. In terms of assembly, interacts with TRX1 and major capisd protein/MCP.

Its subcellular location is the virion. The protein localises to the host nucleus. In terms of biological role, structural component of the T=16 icosahedral capsid. The capsid is composed of pentamers and hexamers of major capsid protein/MCP, which are linked together by heterotrimers called triplexes. These triplexes are formed by a single molecule of triplex protein 1/TRX1 and two copies of triplex protein 2/TRX2. Additionally, TRX1 is required for efficient transport of TRX2 to the nucleus, which is the site of capsid assembly. This chain is Triplex capsid protein 2, found in Human cytomegalovirus (strain AD169) (HHV-5).